The sequence spans 319 residues: Probable arabinan endo-1,5-alpha-L-arabinosidase C (319 aa).

Positions 1 to 16 are cleaved as a signal peptide; sequence MFVYTLIFLFLAAANA. Asp-31 functions as the Proton acceptor in the catalytic mechanism. Asn-190 carries N-linked (GlcNAc...) asparagine glycosylation. Residue Glu-198 is the Proton donor of the active site. Asn-222 is a glycosylation site (N-linked (GlcNAc...) asparagine).

Belongs to the glycosyl hydrolase 43 family.

The protein localises to the secreted. It carries out the reaction Endohydrolysis of (1-&gt;5)-alpha-arabinofuranosidic linkages in (1-&gt;5)-arabinans.. The protein operates within glycan metabolism; L-arabinan degradation. Functionally, endo-1,5-alpha-L-arabinanase involved in degradation of pectin. Its preferred substrate is linear 1,5-alpha-L-arabinan. This is Probable arabinan endo-1,5-alpha-L-arabinosidase C (abnC) from Aspergillus clavatus (strain ATCC 1007 / CBS 513.65 / DSM 816 / NCTC 3887 / NRRL 1 / QM 1276 / 107).